We begin with the raw amino-acid sequence, 875 residues long: MAAAPLYCVCRQPYDVNRFMIECDICKDWFHGSCVQVVEHHAADIDVYHCPNCEPIHGPYMMKKHNNWHRHDYTEPNDGTRPVQAGTAVFVKELQARSFASGDILVQMQGNQVTKRFLEKEGFNYPIVVHDLDGLGLKLPPPSFSVSDVEHYVGANKVIDVIDVAKQADSKMKLGEFVKYYYQPERPKVLNVISLEFSDTRMSNLVVVPDIAQKMSWVENYWPDDSFFPKPFVQKYCLMGMKNSYTDFHIDFGGTSVWYHVLWGEKIFYLIKPTKANLALYEAWSSSPNQSEVFFGEKVDKCYKCVVKQGTTILLPTGWIHAVLTSQDSMAFGGNFLHNLNIDMQLRCYEMERRLKTPDLFKFPYFEAICWYVAKNLLETLKELRENKCEAQGFLVNGVKALISSLKMWLRRELTQPNSEVPDNIRPGHLIKALSKEIRHLEDDSNKAVKTQGSAECSLSRSTLEKGDQAQQAARRLQDHHHHRRRHHHHHHHHHHHHHHHHSRKLPSNLDVLELHTLEVLKRLEVGQLKEDSAFSSKVNGKFKKVCPVPAAAVEASHDNALRLVMCNGKIIRERMPITNVAATVNAVEMYHKHRIKLERIPMCPEEKVKKEKCEDEFGVQCTIKKPVSQGESVQTELRTESPHLASSDSDSKAGDSAEKCSLESESSDGEDGGSQRDSGTFVEHLNSHRHSHHKQALKRERPTSPNTDCAIQGMLSMAGLLCPQASGGAADILQQRWWASQGNGSSTSSSSDMWDSSEPCSAPRSPDAEDGSLGEEYSYRESSLSPPLHPSKRHAPNPTPVSNQATKGKRPKKGQATAKQRLGKILKMSRHKGLFLMKPMVFLIPQQGGTPLDPQFLLQSSSICVFPPPLIVSG.

The segment at 5-56 (PLYCVCRQPYDVNRFMIECDICKDWFHGSCVQVVEHHAADIDVYHCPNCEPI) adopts a PHD-type zinc-finger fold. The region spanning 197–353 (FSDTRMSNLV…MQLRCYEMER (157 aa)) is the JmjC domain. Position 246 (Thr-246) interacts with substrate. Residues His-249 and Asp-251 each coordinate Fe cation. Residue Lys-266 coordinates substrate. His-321 provides a ligand contact to Fe cation. Disordered stretches follow at residues 442–506 (EDDS…SRKL), 629–710 (SQGE…NTDC), and 742–820 (QGNG…ATAK). Residues 448–462 (AVKTQGSAECSLSRS) are compositionally biased toward polar residues. A compositionally biased stretch (basic residues) spans 478–505 (QDHHHHRRRHHHHHHHHHHHHHHHHSRK). Positions 650–663 (SDSKAGDSAEKCSL) are enriched in basic and acidic residues. Residues 688-697 (SHRHSHHKQA) show a composition bias toward basic residues. Low complexity predominate over residues 742-762 (QGNGSSTSSSSDMWDSSEPCS).

It belongs to the JHDM1 histone demethylase family. JHDM1D subfamily. The cofactor is Fe(2+). As to expression, predominantly expressed in brain.

The protein resides in the nucleus. Functionally, histone demethylase required for brain development. Specifically demethylates dimethylated 'Lys-9' and 'Lys-27' (H3K9me2 and H3K27me2, respectively) of histone H3 and monomethylated histone H4 'Lys-20' residue (H4K20Me1), thereby playing a central role in histone code. The chain is Lysine-specific demethylase 7A (kdm7a) from Danio rerio (Zebrafish).